We begin with the raw amino-acid sequence, 2471 residues long: Probable polyketide synthase 24 (2471 aa).

A Ketosynthase family 3 (KS3) domain is found at Glu-21–Gln-449. Residues Cys-190, His-332, and His-372 each act as for beta-ketoacyl synthase activity in the active site. The segment at Gly-654–Tyr-687 is acyl/malonyl transferase. The active-site For acyl/malonyl transferase activity is the Ser-664. An N-terminal hotdog fold region spans residues Ile-953–Asn-1075. One can recognise a PKS/mFAS DH domain in the interval Ile-953 to Pro-1245. Residue His-987 is the Proton acceptor; for dehydratase activity of the active site. The C-terminal hotdog fold stretch occupies residues Asn-1094–Pro-1245. The active-site Proton donor; for dehydratase activity is the Asp-1157. Residues Ile-1426–Asn-1469 adopt a coiled-coil conformation. Residues Ser-2336–Leu-2413 enclose the Carrier domain. Residue Ser-2373 is modified to O-(pantetheine 4'-phosphoryl)serine.

The cofactor is pantetheine 4'-phosphate.

In terms of biological role, probable polyketide synthase. The protein is Probable polyketide synthase 24 (pks24) of Dictyostelium discoideum (Social amoeba).